The following is a 293-amino-acid chain: Elongation factor Ts (293 aa).

The tract at residues 80-83 is involved in Mg(2+) ion dislocation from EF-Tu; that stretch reads TDFV.

It belongs to the EF-Ts family.

The protein resides in the cytoplasm. Associates with the EF-Tu.GDP complex and induces the exchange of GDP to GTP. It remains bound to the aminoacyl-tRNA.EF-Tu.GTP complex up to the GTP hydrolysis stage on the ribosome. The sequence is that of Elongation factor Ts from Janthinobacterium sp. (strain Marseille) (Minibacterium massiliensis).